The chain runs to 233 residues: Phosphoribosylformylglycinamidine synthase subunit PurQ (233 aa).

The 231-residue stretch at 3–233 folds into the Glutamine amidotransferase type-1 domain; that stretch reads SAVLVFPGIN…GLAQHLAKAA (231 aa). Catalysis depends on Cys-87, which acts as the Nucleophile. Catalysis depends on residues His-204 and Glu-206.

Part of the FGAM synthase complex composed of 1 PurL, 1 PurQ and 2 PurS subunits.

The protein resides in the cytoplasm. It catalyses the reaction N(2)-formyl-N(1)-(5-phospho-beta-D-ribosyl)glycinamide + L-glutamine + ATP + H2O = 2-formamido-N(1)-(5-O-phospho-beta-D-ribosyl)acetamidine + L-glutamate + ADP + phosphate + H(+). The catalysed reaction is L-glutamine + H2O = L-glutamate + NH4(+). It functions in the pathway purine metabolism; IMP biosynthesis via de novo pathway; 5-amino-1-(5-phospho-D-ribosyl)imidazole from N(2)-formyl-N(1)-(5-phospho-D-ribosyl)glycinamide: step 1/2. Functionally, part of the phosphoribosylformylglycinamidine synthase complex involved in the purines biosynthetic pathway. Catalyzes the ATP-dependent conversion of formylglycinamide ribonucleotide (FGAR) and glutamine to yield formylglycinamidine ribonucleotide (FGAM) and glutamate. The FGAM synthase complex is composed of three subunits. PurQ produces an ammonia molecule by converting glutamine to glutamate. PurL transfers the ammonia molecule to FGAR to form FGAM in an ATP-dependent manner. PurS interacts with PurQ and PurL and is thought to assist in the transfer of the ammonia molecule from PurQ to PurL. The protein is Phosphoribosylformylglycinamidine synthase subunit PurQ of Rhodopseudomonas palustris (strain ATCC BAA-98 / CGA009).